We begin with the raw amino-acid sequence, 266 residues long: Putative peptidyl-prolyl cis-trans isomerase NifM (266 aa).

Positions 124 to 221 (PEQRLTRHLL…LGWHLLWCEA (98 aa)) constitute a PpiC domain.

Belongs to the PpiC/parvulin rotamase family.

It catalyses the reaction [protein]-peptidylproline (omega=180) = [protein]-peptidylproline (omega=0). Required for the activation and stabilization of the iron-component (NifH) of nitrogenase. Probable PPIase. This chain is Putative peptidyl-prolyl cis-trans isomerase NifM (nifM), found in Klebsiella oxytoca.